A 354-amino-acid chain; its full sequence is Protein RecA (354 aa).

Gly-67–Thr-74 serves as a coordination point for ATP.

The protein belongs to the RecA family.

Its subcellular location is the cytoplasm. Can catalyze the hydrolysis of ATP in the presence of single-stranded DNA, the ATP-dependent uptake of single-stranded DNA by duplex DNA, and the ATP-dependent hybridization of homologous single-stranded DNAs. It interacts with LexA causing its activation and leading to its autocatalytic cleavage. This is Protein RecA from Pasteurella multocida (strain Pm70).